The sequence spans 136 residues: Evasin P991 (136 aa).

A signal peptide spans 1 to 28 (MHSTIVYACLLALAVFVALHGTPLAALA). N-linked (GlcNAc...) asparagine glycosylation is found at asparagine 41, asparagine 61, asparagine 64, asparagine 78, asparagine 92, asparagine 100, and asparagine 122. Disulfide bonds link cysteine 55-cysteine 77, cysteine 73-cysteine 114, cysteine 90-cysteine 119, and cysteine 109-cysteine 128.

The protein resides in the secreted. Functionally, salivary chemokine-binding protein which has chemokine-neutralizing activity and binds to host chemokines CCL2, CCL3, CCL3L1, CCL4, CCL4L1, CCL5, CCL6, CCL7, CCL8, CCL9, CCL11, CCL12, CCL13, CCL14, CCL16, CCL17, CCL18, CCL19, CCL22, CCL23, CCL24 and CCL27. This is Evasin P991 from Amblyomma cajennense (Cayenne tick).